Reading from the N-terminus, the 697-residue chain is Pentatricopeptide repeat-containing protein At5g46460, mitochondrial (697 aa).

The N-terminal 36 residues, 1 to 36 (MWSRAIFQRFRFRAFSISHVIHGKCYRSFSVTVEFQ), are a transit peptide targeting the mitochondrion. 14 PPR repeats span residues 39 to 64 (EVLICNHLLSRRIDEAREVFNQVPSP), 65 to 95 (HVSLYTKMITGYTRSNRLVDALNLFDEMPVR), 96 to 130 (DVVSWNSMISGCVECGDMNTAVKLFDEMPERSVVS), 131 to 157 (WTAMVNGCFRSGKVDQAERLFYQMPVK), 158 to 192 (DTAAWNSMVHGYLQFGKVDDALKLFKQMPGKNVIS), 193 to 223 (WTTMICGLDQNERSGEALDLFKNMLRCCIKS), 224 to 258 (TSRPFTCVITACANAPAFHMGIQVHGLIIKLGFLY), 259 to 289 (EEYVSASLITFYANCKRIGDSRKVFDEKVHE), 290 to 324 (QVAVWTALLSGYSLNKKHEDALSIFSGMLRNSILP), 325 to 359 (NQSTFASGLNSCSALGTLDWGKEMHGVAVKLGLET), 360 to 390 (DAFVGNSLVVMYSDSGNVNDAVSVFIKIFKK), 391 to 425 (SIVSWNSIIVGCAQHGRGKWAFVIFGQMIRLNKEP), 426 to 456 (DEITFTGLLSACSHCGFLEKGRKLFYYMSSG), and 463 to 497 (KIQHYTCMVDILGRCGKLKEAEELIERMVVKPNEM). Residues 498 to 573 (VWLALLSACR…KPGSSWVVIR (76 aa)) are type E motif. The type E(+) motif stretch occupies residues 574-602 (GKKHEFFSGDQPHCSRIYEKLEFLREKLK). The segment at 603–697 (ELGYAPDYRS…NGTCSCGDYW (95 aa)) is type DYW motif.

The protein belongs to the PPR family. PCMP-H subfamily.

It localises to the mitochondrion. The chain is Pentatricopeptide repeat-containing protein At5g46460, mitochondrial (PCMP-H49) from Arabidopsis thaliana (Mouse-ear cress).